Reading from the N-terminus, the 231-residue chain is Venom allergen 3 homolog (231 aa).

An N-terminal signal peptide occupies residues 1 to 21; it reads MSSCMLFFTVIIAGVFMGTIA. Cystine bridges form between Cys-25–Cys-40, Cys-30–Cys-124, and Cys-51–Cys-117. Residues 68–215 enclose the SCP domain; the sequence is VTLHNQLRRK…WNQQYLVCNY (148 aa). An N-linked (GlcNAc...) asparagine glycan is attached at Asn-145. Cys-196 and Cys-213 are disulfide-bonded.

The protein belongs to the CRISP family. In terms of tissue distribution, expressed by the venom gland.

The protein resides in the secreted. In Dinoponera quadriceps (South American ant), this protein is Venom allergen 3 homolog.